A 245-amino-acid polypeptide reads, in one-letter code: Probable phosphatase YcdX (245 aa).

Zn(2+) is bound by residues His-7, His-9, His-15, His-40, Glu-73, His-101, His-131, Asp-192, and His-194.

The protein belongs to the PHP family. Homotrimer. Zn(2+) is required as a cofactor.

In Salmonella agona (strain SL483), this protein is Probable phosphatase YcdX.